Here is a 485-residue protein sequence, read N- to C-terminus: Tektin-5 (485 aa).

Coiled-coil stretches lie at residues 114 to 185, 225 to 247, 307 to 385, and 421 to 444; these read RLTD…EVNC, QEQM…DAQH, QNMR…MAKE, and TIDD…QLLV.

Belongs to the tektin family. As to quaternary structure, microtubule inner protein component of sperm flagellar doublet microtubules. Interacts with TEKT3. In terms of processing, ubiquitinated, leading to its degradation. Deubiquitinated by USP16, promoting its stability.

The protein resides in the cytoplasm. The protein localises to the cytoskeleton. It localises to the flagellum axoneme. Sperm-specific microtubule inner protein (MIP) part of the dynein-decorated doublet microtubules (DMTs) in flagellar axoneme. Forms an extensive interaction network in different conformations that reinforces the helix bundle composed by other tektin proteins (TEKT1 to TEKT4) and MIPs to anchor the tektin bundle onto the tubulin wall of A-tubule of the sperm flagellum. The polypeptide is Tektin-5 (TEKT5) (Homo sapiens (Human)).